The following is a 589-amino-acid chain: Aspartate--tRNA ligase (589 aa).

Glu-175 contacts L-aspartate. Residues 199–202 form an aspartate region; sequence QLFK. Arg-221 serves as a coordination point for L-aspartate. Residues 221-223 and Gln-230 contribute to the ATP site; that span reads RDE. An L-aspartate-binding site is contributed by His-449. Glu-483 lines the ATP pocket. Arg-490 contributes to the L-aspartate binding site. An ATP-binding site is contributed by 535–538; sequence GLDR.

The protein belongs to the class-II aminoacyl-tRNA synthetase family. Type 1 subfamily. As to quaternary structure, homodimer.

Its subcellular location is the cytoplasm. The catalysed reaction is tRNA(Asp) + L-aspartate + ATP = L-aspartyl-tRNA(Asp) + AMP + diphosphate. Its function is as follows. Catalyzes the attachment of L-aspartate to tRNA(Asp) in a two-step reaction: L-aspartate is first activated by ATP to form Asp-AMP and then transferred to the acceptor end of tRNA(Asp). This Lysinibacillus sphaericus (strain C3-41) protein is Aspartate--tRNA ligase.